The sequence spans 840 residues: Exocyst complex component 7 (840 aa).

Positions 1-112 are disordered; it reads MSAPPRLSAR…ATSTTSPFSY (112 aa). Residues 19-31 are compositionally biased toward polar residues; that stretch reads SNAPSPTSPTGLK. 2 stretches are compositionally biased toward low complexity: residues 50–73 and 83–111; these read KSSVGISSLPTIPSTKSTSPTLPK and QQQQQQHTNKSTSPSSNTPTATSTTSPFS. The stretch at 193–227 forms a coiled coil; it reads KNNATSELTEQDDQLENDKRDLQFIKEQLEKNNSM. A disordered region spans residues 601–638; that stretch reads QDNNNSNSNSNAPSSTSSNSKSSSSSSSSSSSNSASST. The segment covering 603–637 has biased composition (low complexity); it reads NNNSNSNSNAPSSTSSNSKSSSSSSSSSSSNSASS.

This sequence belongs to the EXO70 family. As to quaternary structure, the exocyst complex is composed of sec3/exoc1, sec5/exoc2, sec6/exoc3, sec8/exoc4, sec10/exoc5, sec15/exoc6, exo70/exoc7 and exo84/exoc8.

The protein localises to the cytoplasm. It localises to the cytosol. Its subcellular location is the cell membrane. It is found in the midbody. The protein resides in the midbody ring. In terms of biological role, component of the exocyst complex involved in the docking of exocytic vesicles with fusion sites on the plasma membrane. The sequence is that of Exocyst complex component 7 (exoc7) from Dictyostelium discoideum (Social amoeba).